The chain runs to 331 residues: ADP-L-glycero-D-manno-heptose-6-epimerase (331 aa).

NADP(+) contacts are provided by residues 11-12, 32-33, lysine 39, lysine 54, 75-79, and asparagine 92; these read FI, DN, and EGACS. Tyrosine 139 acts as the Proton acceptor in catalysis. Residue lysine 143 participates in NADP(+) binding. Asparagine 168 is a substrate binding site. Residues valine 169 and lysine 177 each coordinate NADP(+). The Proton acceptor role is filled by lysine 177. Residues arginine 179, histidine 186, 200-203, arginine 213, and tyrosine 292 contribute to the substrate site; that span reads FGEY.

It belongs to the NAD(P)-dependent epimerase/dehydratase family. HldD subfamily. Homopentamer. NADP(+) serves as cofactor.

The catalysed reaction is ADP-D-glycero-beta-D-manno-heptose = ADP-L-glycero-beta-D-manno-heptose. Its pathway is nucleotide-sugar biosynthesis; ADP-L-glycero-beta-D-manno-heptose biosynthesis; ADP-L-glycero-beta-D-manno-heptose from D-glycero-beta-D-manno-heptose 7-phosphate: step 4/4. Functionally, catalyzes the interconversion between ADP-D-glycero-beta-D-manno-heptose and ADP-L-glycero-beta-D-manno-heptose via an epimerization at carbon 6 of the heptose. This Cupriavidus taiwanensis (strain DSM 17343 / BCRC 17206 / CCUG 44338 / CIP 107171 / LMG 19424 / R1) (Ralstonia taiwanensis (strain LMG 19424)) protein is ADP-L-glycero-D-manno-heptose-6-epimerase.